The chain runs to 404 residues: uncharacterized protein (404 aa).

Positions 69, 75, 78, and 166 each coordinate [4Fe-4S] cluster. 4 residues coordinate S-adenosyl-L-methionine: Gln-226, Tyr-253, Glu-274, and Asp-334. Cys-361 functions as the Nucleophile in the catalytic mechanism.

The protein belongs to the class I-like SAM-binding methyltransferase superfamily. RNA M5U methyltransferase family.

This is an uncharacterized protein from Treponema denticola (strain ATCC 35405 / DSM 14222 / CIP 103919 / JCM 8153 / KCTC 15104).